The chain runs to 183 residues: Phosphinothricin N-acetyltransferase (183 aa).

Residues 8 to 173 enclose the N-acetyltransferase domain; sequence ADIRRATEAD…WQLDFSLPVP (166 aa). Residues 91-93, 99-104, and Asn130 contribute to the acetyl-CoA site; these read VYV and RTGLGS.

It belongs to the acetyltransferase family. PAT/BAR subfamily.

The catalysed reaction is phosphinothricin + acetyl-CoA = N-acetylphosphinothricin + CoA + H(+). Inactivates phosphinothricin (PPT) by transfer of an acetyl group from acetyl CoA. Can also acetylate demethylphosphinothricin but not PTT or glutamate. This enzyme is an effector of phosphinothricin tripeptide (PTT or bialaphos) resistance. This is Phosphinothricin N-acetyltransferase from Streptomyces hygroscopicus.